The chain runs to 388 residues: Chorismate synthase (388 aa).

Residues R39 and R45 each coordinate NADP(+). FMN is bound by residues R130–S132, N251–A252, G296, K311–T315, and R337.

Belongs to the chorismate synthase family. As to quaternary structure, homotetramer. The cofactor is FMNH2.

It carries out the reaction 5-O-(1-carboxyvinyl)-3-phosphoshikimate = chorismate + phosphate. It functions in the pathway metabolic intermediate biosynthesis; chorismate biosynthesis; chorismate from D-erythrose 4-phosphate and phosphoenolpyruvate: step 7/7. Functionally, catalyzes the anti-1,4-elimination of the C-3 phosphate and the C-6 proR hydrogen from 5-enolpyruvylshikimate-3-phosphate (EPSP) to yield chorismate, which is the branch point compound that serves as the starting substrate for the three terminal pathways of aromatic amino acid biosynthesis. This reaction introduces a second double bond into the aromatic ring system. The protein is Chorismate synthase of Streptococcus pyogenes serotype M6 (strain ATCC BAA-946 / MGAS10394).